The following is a 181-amino-acid chain: MSTGRRVFVLRIGHRPVRDHRVTTHVGLVARAFGADGIFLEESVEESVIRTLRNVVENWGGDFKVLTTRDPRETVANWKKNGGIVVHLTMYGENISEELINLISGQGKDILVVVGGEKVPRWLFEEADFNVAIGNQPHSEVAALAVFLDRLFKGEELRREFPGAKLSIIPSKRGKIVVRRE.

Residues leucine 88, 115-119, and 133-140 each bind S-adenosyl-L-methionine; these read GGEKV and IGNQPHSE.

This sequence belongs to the aTrm56 family. In terms of assembly, homodimer.

Its subcellular location is the cytoplasm. It carries out the reaction cytidine(56) in tRNA + S-adenosyl-L-methionine = 2'-O-methylcytidine(56) in tRNA + S-adenosyl-L-homocysteine + H(+). Specifically catalyzes the AdoMet-dependent 2'-O-ribose methylation of cytidine at position 56 in tRNAs. This is tRNA (cytidine(56)-2'-O)-methyltransferase from Thermofilum pendens (strain DSM 2475 / Hrk 5).